We begin with the raw amino-acid sequence, 459 residues long: Bifunctional protein GlmU (459 aa).

The pyrophosphorylase stretch occupies residues 1–229; it reads MSNFAIILAA…FDESLGVNDR (229 aa). Residues 8-11, Lys-22, Gln-72, and 77-78 contribute to the UDP-N-acetyl-alpha-D-glucosamine site; these read LAAG and GT. Asp-102 contributes to the Mg(2+) binding site. 4 residues coordinate UDP-N-acetyl-alpha-D-glucosamine: Gly-139, Glu-154, Asn-169, and Asn-227. Residue Asn-227 coordinates Mg(2+). The linker stretch occupies residues 230–250; it reads VALATAESVMRRRINHKHMVN. The N-acetyltransferase stretch occupies residues 251 to 459; that stretch reads GVSFVNPEAT…TRLPHHPKNQ (209 aa). Positions 332 and 350 each coordinate UDP-N-acetyl-alpha-D-glucosamine. The active-site Proton acceptor is the His-362. UDP-N-acetyl-alpha-D-glucosamine-binding residues include Tyr-365 and Asn-376. Residues Ala-379, 385 to 386, Ser-404, Ala-422, and Arg-439 each bind acetyl-CoA; that span reads NY.

This sequence in the N-terminal section; belongs to the N-acetylglucosamine-1-phosphate uridyltransferase family. In the C-terminal section; belongs to the transferase hexapeptide repeat family. In terms of assembly, homotrimer. Mg(2+) is required as a cofactor.

The protein resides in the cytoplasm. The enzyme catalyses alpha-D-glucosamine 1-phosphate + acetyl-CoA = N-acetyl-alpha-D-glucosamine 1-phosphate + CoA + H(+). It carries out the reaction N-acetyl-alpha-D-glucosamine 1-phosphate + UTP + H(+) = UDP-N-acetyl-alpha-D-glucosamine + diphosphate. It functions in the pathway nucleotide-sugar biosynthesis; UDP-N-acetyl-alpha-D-glucosamine biosynthesis; N-acetyl-alpha-D-glucosamine 1-phosphate from alpha-D-glucosamine 6-phosphate (route II): step 2/2. The protein operates within nucleotide-sugar biosynthesis; UDP-N-acetyl-alpha-D-glucosamine biosynthesis; UDP-N-acetyl-alpha-D-glucosamine from N-acetyl-alpha-D-glucosamine 1-phosphate: step 1/1. Its pathway is bacterial outer membrane biogenesis; LPS lipid A biosynthesis. Catalyzes the last two sequential reactions in the de novo biosynthetic pathway for UDP-N-acetylglucosamine (UDP-GlcNAc). The C-terminal domain catalyzes the transfer of acetyl group from acetyl coenzyme A to glucosamine-1-phosphate (GlcN-1-P) to produce N-acetylglucosamine-1-phosphate (GlcNAc-1-P), which is converted into UDP-GlcNAc by the transfer of uridine 5-monophosphate (from uridine 5-triphosphate), a reaction catalyzed by the N-terminal domain. In Streptococcus pneumoniae (strain JJA), this protein is Bifunctional protein GlmU.